The chain runs to 574 residues: Sulfite reductase [NADPH] hemoprotein beta-component (574 aa).

[4Fe-4S] cluster contacts are provided by C439, C445, C484, and C488. C488 provides a ligand contact to siroheme.

This sequence belongs to the nitrite and sulfite reductase 4Fe-4S domain family. Alpha(8)-beta(8). The alpha component is a flavoprotein, the beta component is a hemoprotein. It depends on siroheme as a cofactor. [4Fe-4S] cluster is required as a cofactor.

It carries out the reaction hydrogen sulfide + 3 NADP(+) + 3 H2O = sulfite + 3 NADPH + 4 H(+). Its pathway is sulfur metabolism; hydrogen sulfide biosynthesis; hydrogen sulfide from sulfite (NADPH route): step 1/1. In terms of biological role, component of the sulfite reductase complex that catalyzes the 6-electron reduction of sulfite to sulfide. This is one of several activities required for the biosynthesis of L-cysteine from sulfate. The sequence is that of Sulfite reductase [NADPH] hemoprotein beta-component from Paenibacillus sp. (strain JDR-2).